Here is a 740-residue protein sequence, read N- to C-terminus: Folic acid synthesis protein fol1 (740 aa).

DHNA stretches follow at residues Asp-39–Asp-160 and Asp-161–Ser-280. Positions Ile-291–Pro-449 are HPPK. The Pterin-binding domain maps to Thr-471–Lys-730. The segment at Ile-473 to Tyr-740 is DHPS. Asn-478 is a binding site for Mg(2+). (7,8-dihydropterin-6-yl)methyl diphosphate is bound by residues Thr-517, Asp-552, Asn-571, Asp-643, Lys-683, and Arg-718 to His-720.

This sequence in the N-terminal section; belongs to the DHNA family. The protein in the central section; belongs to the HPPK family. It in the C-terminal section; belongs to the DHPS family. Mg(2+) serves as cofactor.

The catalysed reaction is 7,8-dihydroneopterin = 6-hydroxymethyl-7,8-dihydropterin + glycolaldehyde. The enzyme catalyses 6-hydroxymethyl-7,8-dihydropterin + ATP = (7,8-dihydropterin-6-yl)methyl diphosphate + AMP + H(+). It carries out the reaction (7,8-dihydropterin-6-yl)methyl diphosphate + 4-aminobenzoate = 7,8-dihydropteroate + diphosphate. It functions in the pathway cofactor biosynthesis; tetrahydrofolate biosynthesis; 2-amino-4-hydroxy-6-hydroxymethyl-7,8-dihydropteridine diphosphate from 7,8-dihydroneopterin triphosphate: step 3/4. It participates in cofactor biosynthesis; tetrahydrofolate biosynthesis; 2-amino-4-hydroxy-6-hydroxymethyl-7,8-dihydropteridine diphosphate from 7,8-dihydroneopterin triphosphate: step 4/4. The protein operates within cofactor biosynthesis; tetrahydrofolate biosynthesis; 7,8-dihydrofolate from 2-amino-4-hydroxy-6-hydroxymethyl-7,8-dihydropteridine diphosphate and 4-aminobenzoate: step 1/2. Catalyzes three sequential steps of tetrahydrofolate biosynthesis. This Pneumocystis carinii protein is Folic acid synthesis protein fol1 (fol1).